Here is a 371-residue protein sequence, read N- to C-terminus: Regulatory protein RapK (371 aa).

TPR repeat units follow at residues 7-42, 93-130, 175-208, 215-248, 254-290, and 331-364; these read EVVATTLNDWYIAIKKQKVDESIKYYSEIKKLFDEM, EYNFYLFEAMYEAYNKNYDRAINLYGLAEKKLAEIPDE, ATSTMIAAANYADMKRFEEAEQYYLEAIDIAKET, AQLFHNLSIVYSDWNKPDKCIESLEKAIGNESWL, INSLFMMIKELFKIDEKMKAINFYNKAQERLILMENK, and DELSYIAAKRFESIGAFEEATSFFNAKIWAEQKM.

Belongs to the Rap family.

It is found in the cytoplasm. Inhibited by PhrK, which prevents RapK-ComA interaction. Functionally, involved in the regulation of genetic competence development. Inhibits the activity of ComA, a transcriptional factor that regulates the development of genetic competence. Likely affects the activity of additional regulators, in particular Spo0A. In Bacillus subtilis (strain 168), this protein is Regulatory protein RapK (rapK).